Reading from the N-terminus, the 385-residue chain is DNA replication and repair protein RecF (385 aa).

30–37 provides a ligand contact to ATP; sequence GPNGNGKT.

Belongs to the RecF family.

Its subcellular location is the cytoplasm. The RecF protein is involved in DNA metabolism; it is required for DNA replication and normal SOS inducibility. RecF binds preferentially to single-stranded, linear DNA. It also seems to bind ATP. The polypeptide is DNA replication and repair protein RecF (Mycobacterium leprae (strain Br4923)).